The chain runs to 330 residues: tRNA (guanine(37)-N(1))-methyltransferase Trm5b (330 aa).

S-adenosyl-L-methionine-binding positions include Arg-173, 211–212 (DI), 238–239 (DS), and Asn-252.

The protein belongs to the class I-like SAM-binding methyltransferase superfamily. TRM5/TYW2 family.

It is found in the cytoplasm. The catalysed reaction is guanosine(37) in tRNA + S-adenosyl-L-methionine = N(1)-methylguanosine(37) in tRNA + S-adenosyl-L-homocysteine + H(+). Its function is as follows. Specifically methylates the N1 position of guanosine-37 in various tRNAs. The chain is tRNA (guanine(37)-N(1))-methyltransferase Trm5b from Pyrococcus abyssi (strain GE5 / Orsay).